Consider the following 1527-residue polypeptide: Lysophospholipase nte1 (1527 aa).

Topologically, residues 1–69 (MADDGGPFPL…PPPAPSTMVG (69 aa)) are cytoplasmic. A helical transmembrane segment spans residues 70–90 (WIGWVFSFVFQVIPSILYWAI). Topologically, residues 91–112 (TFCTITLPTWLFTLFSMSLTFT) are lumenal. Residues 113-133 (MNFTTLLLIALAIVSTVSWFI) form a helical membrane-spanning segment. Residues 134-1527 (RYRFLNMYSR…RTLAPRRASI (1394 aa)) lie on the Cytoplasmic side of the membrane. Disordered stretches follow at residues 240 to 259 (ADHE…GQNV), 299 to 387 (LSSS…HPDI), 576 to 596 (EKEQ…PFHR), and 750 to 785 (AHGE…RRQS). Residues 355 to 373 (HLEESRGTPDHDHQPESRT) show a composition bias toward basic and acidic residues. A nucleoside 3',5'-cyclic phosphate is bound by residues 685-804 (GGTS…VGSV) and 846-966 (RLTS…IAQR). The segment covering 761–771 (RTTTASSRTSS) has biased composition (low complexity). The PNPLA domain occupies 1224 to 1388 (LVLGGGGARG…IDNLTVPHMK (165 aa)). Positions 1228 to 1233 (GGGARG) match the GXGXXG motif. The GXSXG motif lies at 1255-1259 (GTSIG). The active-site Nucleophile is Ser-1257. Catalysis depends on Asp-1375, which acts as the Proton acceptor. A DGA/G motif is present at residues 1375-1377 (DGG).

Belongs to the NTE family.

It is found in the endoplasmic reticulum membrane. The enzyme catalyses a 1-acyl-sn-glycero-3-phosphocholine + H2O = sn-glycerol 3-phosphocholine + a fatty acid + H(+). Its activity is regulated as follows. Inhibited by organophosphorus esters. In terms of biological role, intracellular phospholipase B that catalyzes the double deacylation of phosphatidylcholine (PC) to glycerophosphocholine (GroPCho). Plays an important role in membrane lipid homeostasis. Responsible for the rapid PC turnover in response to inositol, elevated temperatures, or when choline is present in the growth medium. This Aspergillus terreus (strain NIH 2624 / FGSC A1156) protein is Lysophospholipase nte1 (nte1).